A 288-amino-acid polypeptide reads, in one-letter code: Light-independent protochlorophyllide reductase iron-sulfur ATP-binding protein (288 aa).

ATP is bound by residues 10–15 and lysine 39; that span reads GIGKST. Serine 14 serves as a coordination point for Mg(2+). The [4Fe-4S] cluster site is built by cysteine 95 and cysteine 129. Residue 180–181 coordinates ATP; that stretch reads NR.

This sequence belongs to the NifH/BchL/ChlL family. In terms of assembly, homodimer. Protochlorophyllide reductase is composed of three subunits; ChlL, ChlN and ChlB. It depends on [4Fe-4S] cluster as a cofactor.

Its subcellular location is the plastid. The protein resides in the chloroplast. The catalysed reaction is chlorophyllide a + oxidized 2[4Fe-4S]-[ferredoxin] + 2 ADP + 2 phosphate = protochlorophyllide a + reduced 2[4Fe-4S]-[ferredoxin] + 2 ATP + 2 H2O. It functions in the pathway porphyrin-containing compound metabolism; chlorophyll biosynthesis (light-independent). In terms of biological role, component of the dark-operative protochlorophyllide reductase (DPOR) that uses Mg-ATP and reduced ferredoxin to reduce ring D of protochlorophyllide (Pchlide) to form chlorophyllide a (Chlide). This reaction is light-independent. The L component serves as a unique electron donor to the NB-component of the complex, and binds Mg-ATP. In Chara vulgaris (Common stonewort), this protein is Light-independent protochlorophyllide reductase iron-sulfur ATP-binding protein.